Here is a 496-residue protein sequence, read N- to C-terminus: Genome polyprotein (496 aa).

The Extracellular portion of the chain corresponds to 1–447; the sequence is SRCTHLENRD…HTVLGGAFNS (447 aa). Intrachain disulfides connect C3–C30, C60–C116, C60–C121, C74–C105, C92–C116, and C92–C121. Positions 98–111 are fusion peptide; sequence DRGWGNHCGLFGKG. N-linked (GlcNAc...) asparagine; by host glycosylation is present at N154. 2 disulfides stabilise this stretch: C186-C290 and C307-C338. A helical membrane pass occupies residues 448–468; sequence IFGGVGFLPKLLMGVALAWLG. The Cytoplasmic segment spans residues 469-479; sequence LNTRNPTMSMS. The chain crosses the membrane as a helical span at residues 480 to 496; the sequence is FLLTGGLVLAMTLGVGA.

As to quaternary structure, homodimer; in the endoplasmic reticulum and Golgi. N-glycosylated.

It localises to the virion membrane. It is found in the host endoplasmic reticulum membrane. In terms of biological role, binds to host cell surface receptor and mediates fusion between viral and cellular membranes. Envelope protein is synthesized in the endoplasmic reticulum in the form of heterodimer with protein prM. They play a role in virion budding in the ER, and the newly formed immature particle is covered with 60 spikes composed of heterodimer between precursor prM and envelope protein E. The virion is transported to the Golgi apparatus where the low pH causes dissociation of PrM-E heterodimers and formation of E homodimers. prM-E cleavage is ineficient, and many virions are only partially matured. These uncleaved prM would play a role in immune evasion. In Bos taurus (Bovine), this protein is Genome polyprotein.